A 521-amino-acid chain; its full sequence is Spermidine transporter DUR31 (521 aa).

The helical transmembrane segment at 11–31 (AIIYLSYAFMLATGLFLAWKF) threads the bilayer. N-linked (GlcNAc...) asparagine glycosylation occurs at Asn-41. The next 12 membrane-spanning stretches (helical) occupy residues 47–67 (IPLA…TTYA), 79–99 (LVYT…GPVI), 117–137 (FGMV…FLFM), 156–176 (ALGA…FGGF), 187–207 (GVCV…YIEI), 227–247 (LVYI…GFWL), 264–284 (IAAF…FLAV), 310–330 (WLVA…FDSL), 354–374 (IMLI…ADNI), 377–397 (IYLI…LGLA), 406–426 (GFDV…FGTV), and 453–473 (FGAF…SAAL).

This sequence belongs to the sodium:solute symporter (SSF) (TC 2.A.21) family.

It is found in the membrane. The enzyme catalyses spermidine(in) = spermidine(out). In terms of biological role, spermidine transporter that is also used by salivary gland-secreted histatin 5 (Hst 5) to enter into candidal cells. A major component of host nonimmune defense systems is salivary histatins, a family of small (3-4 kDa), histidine-rich, cationic proteins secreted by major salivary glands in humans and higher primates. Hst 5 is the most potent of the 12 histatin family members and has fungicidal activity against blastoconidial and filamentous forms of Candida albicans. DUR31 only functions under high concentrations of Hst 5. Hst 5 cojugates to spermidine to be uptaken by DUR31. The polypeptide is Spermidine transporter DUR31 (Candida albicans (strain SC5314 / ATCC MYA-2876) (Yeast)).